The sequence spans 66 residues: Large ribosomal subunit protein bL32 (66 aa).

It belongs to the bacterial ribosomal protein bL32 family.

The sequence is that of Large ribosomal subunit protein bL32 from Rickettsia canadensis (strain McKiel).